Reading from the N-terminus, the 703-residue chain is Methionine--tRNA ligase (703 aa).

Positions 15 to 25 (PYANGPVHLGH) match the 'HIGH' region motif. Zn(2+)-binding residues include C147, C150, C160, and C163. Residues 345–349 (KFSKS) carry the 'KMSKS' region motif. ATP is bound at residue K348. Residues 602 to 703 (DFQKIDLRVA…GEGINGNSVS (102 aa)) enclose the tRNA-binding domain.

It belongs to the class-I aminoacyl-tRNA synthetase family. MetG type 1 subfamily. Homodimer. Zn(2+) serves as cofactor.

It localises to the cytoplasm. It catalyses the reaction tRNA(Met) + L-methionine + ATP = L-methionyl-tRNA(Met) + AMP + diphosphate. Is required not only for elongation of protein synthesis but also for the initiation of all mRNA translation through initiator tRNA(fMet) aminoacylation. This is Methionine--tRNA ligase from Chlorobaculum tepidum (strain ATCC 49652 / DSM 12025 / NBRC 103806 / TLS) (Chlorobium tepidum).